Consider the following 245-residue polypeptide: Phosphoadenosine 5'-phosphosulfate reductase (245 aa).

The active-site Nucleophile; cysteine thiosulfonate intermediate is Cys239.

Belongs to the PAPS reductase family. CysH subfamily.

It localises to the cytoplasm. It catalyses the reaction [thioredoxin]-disulfide + sulfite + adenosine 3',5'-bisphosphate + 2 H(+) = [thioredoxin]-dithiol + 3'-phosphoadenylyl sulfate. The protein operates within sulfur metabolism; hydrogen sulfide biosynthesis; sulfite from sulfate: step 3/3. Its function is as follows. Catalyzes the formation of sulfite from phosphoadenosine 5'-phosphosulfate (PAPS) using thioredoxin as an electron donor. This is Phosphoadenosine 5'-phosphosulfate reductase from Shewanella oneidensis (strain ATCC 700550 / JCM 31522 / CIP 106686 / LMG 19005 / NCIMB 14063 / MR-1).